A 590-amino-acid chain; its full sequence is TPR repeat-containing protein PA4667 (590 aa).

TPR repeat units lie at residues 235 to 268 (VAPL…HPDD), 269 to 302 (KRVR…FPDD), 370 to 403 (LPAQ…QPDY), 405 to 438 (IQLY…YPED), and 508 to 541 (PAIL…YPDH).

The sequence is that of TPR repeat-containing protein PA4667 from Pseudomonas aeruginosa (strain ATCC 15692 / DSM 22644 / CIP 104116 / JCM 14847 / LMG 12228 / 1C / PRS 101 / PAO1).